The primary structure comprises 111 residues: MEVVRGSSLVLLVLLLGALLVSQVESKSCCPNTTGRNIYNACRLTGAPRPTCAKLSGCKIISGSTCPSDYPKFYCTLGCESSQCATNSNGDAEAVRCKTACSDLCQDVDDA.

The first 26 residues, 1–26, serve as a signal peptide directing secretion; that stretch reads MEVVRGSSLVLLVLLLGALLVSQVES. 3 disulfide bridges follow: Cys29/Cys66, Cys30/Cys58, and Cys42/Cys52. Residues 73–111 constitute a propeptide, acidic domain; that stretch reads FYCTLGCESSQCATNSNGDAEAVRCKTACSDLCQDVDDA.

The protein belongs to the plant thionin (TC 1.C.44) family.

It is found in the secreted. Functionally, thionins are small plant proteins which are toxic to animal cells. They seem to exert their toxic effect at the level of the cell membrane. Their precise function is not known. The polypeptide is Viscotoxin-A3 (THI2.1) (Viscum album (European mistletoe)).